We begin with the raw amino-acid sequence, 209 residues long: FMN-dependent NADH:quinone oxidoreductase (209 aa).

FMN contacts are provided by residues Ser-9, 19–21, and 143–146; these read SVS and TRGG.

Belongs to the azoreductase type 1 family. Homodimer. The cofactor is FMN.

The catalysed reaction is 2 a quinone + NADH + H(+) = 2 a 1,4-benzosemiquinone + NAD(+). The enzyme catalyses N,N-dimethyl-1,4-phenylenediamine + anthranilate + 2 NAD(+) = 2-(4-dimethylaminophenyl)diazenylbenzoate + 2 NADH + 2 H(+). Quinone reductase that provides resistance to thiol-specific stress caused by electrophilic quinones. Its function is as follows. Also exhibits azoreductase activity. Catalyzes the reductive cleavage of the azo bond in aromatic azo compounds to the corresponding amines. The sequence is that of FMN-dependent NADH:quinone oxidoreductase from Leptothrix cholodnii (strain ATCC 51168 / LMG 8142 / SP-6) (Leptothrix discophora (strain SP-6)).